Reading from the N-terminus, the 597-residue chain is UvrABC system protein C (597 aa).

A GIY-YIG domain is found at 15-93; it reads NSPGVYQYFD…IKKHQPRFNV (79 aa). The UVR domain maps to 207-242; the sequence is KDSLQRFRNQMKQHSEKMEFEDAQRIKNKIDVLENY.

Belongs to the UvrC family. As to quaternary structure, interacts with UvrB in an incision complex.

The protein localises to the cytoplasm. Functionally, the UvrABC repair system catalyzes the recognition and processing of DNA lesions. UvrC both incises the 5' and 3' sides of the lesion. The N-terminal half is responsible for the 3' incision and the C-terminal half is responsible for the 5' incision. This Christiangramia forsetii (strain DSM 17595 / CGMCC 1.15422 / KT0803) (Gramella forsetii) protein is UvrABC system protein C.